We begin with the raw amino-acid sequence, 212 residues long: Thymidylate kinase (212 aa).

10–17 (GLDGAGKT) is an ATP binding site.

Belongs to the thymidylate kinase family.

The catalysed reaction is dTMP + ATP = dTDP + ADP. Its function is as follows. Phosphorylation of dTMP to form dTDP in both de novo and salvage pathways of dTTP synthesis. This is Thymidylate kinase from Blochmanniella pennsylvanica (strain BPEN).